The following is a 502-amino-acid chain: Intracellular exo-alpha-(1-&gt;5)-L-arabinofuranosidase (502 aa).

Positions 29, 74, and 174 each coordinate alpha-L-arabinofuranose. The active-site Proton donor/acceptor is the Glu-175. The alpha-L-arabinofuranose site is built by Tyr-246, Glu-294, and Gln-351. Glu-294 (nucleophile) is an active-site residue.

The protein belongs to the glycosyl hydrolase 51 family. In terms of assembly, homohexamer; trimer of dimers.

Its subcellular location is the cytoplasm. The enzyme catalyses Hydrolysis of terminal non-reducing alpha-L-arabinofuranoside residues in alpha-L-arabinosides.. It participates in glycan metabolism; L-arabinan degradation. Its activity is regulated as follows. Strongly inhibited by Hg(2+). Involved in the degradation of arabinan and is a key enzyme in the complete degradation of the plant cell wall. Catalyzes the cleavage of terminal alpha-(1-&gt;5)-arabinofuranosyl bonds in different hemicellulosic homopolysaccharides (branched and debranched arabinans). It acts preferentially on aryl-alpha-L-arabinofuranosides, and is much less effective on aryl-beta-D-xylopyranosides. This is Intracellular exo-alpha-(1-&gt;5)-L-arabinofuranosidase (abfA) from Geobacillus stearothermophilus (Bacillus stearothermophilus).